The chain runs to 899 residues: Translation initiation factor IF-2 (899 aa).

Disordered stretches follow at residues 31 to 227 (KKAE…ATEQ) and 240 to 310 (VTTS…GFDK). 2 stretches are compositionally biased toward polar residues: residues 36–47 (NVSQTEKQSLLS) and 73–87 (STLS…SKSV). Composition is skewed to basic and acidic residues over residues 101 to 173 (SALE…EKAK), 181 to 219 (AKSE…ETNE), and 247 to 261 (RAAE…ETTG). Positions 296–308 (PQVNAPTSMQQGF) are enriched in polar residues. One can recognise a tr-type G domain in the interval 398–565 (SRAPVVTIMG…AILLQSEILE (168 aa)). A G1 region spans residues 407 to 414 (GHVDHGKT). Position 407–414 (407–414 (GHVDHGKT)) interacts with GTP. The G2 stretch occupies residues 432–436 (GITQH). The segment at 453–456 (DTPG) is G3. GTP is bound by residues 453–457 (DTPGH) and 507–510 (NKID). Residues 507 to 510 (NKID) are G4. Residues 543–545 (SAK) form a G5 region.

This sequence belongs to the TRAFAC class translation factor GTPase superfamily. Classic translation factor GTPase family. IF-2 subfamily.

The protein resides in the cytoplasm. In terms of biological role, one of the essential components for the initiation of protein synthesis. Protects formylmethionyl-tRNA from spontaneous hydrolysis and promotes its binding to the 30S ribosomal subunits. Also involved in the hydrolysis of GTP during the formation of the 70S ribosomal complex. The polypeptide is Translation initiation factor IF-2 (Photobacterium profundum (strain SS9)).